The following is a 350-amino-acid chain: Twinfilin-1 (350 aa).

N-acetylserine is present on S2. In terms of domain architecture, ADF-H 1 spans 2–139; it reads SHQTGIQASE…SLHGYKKYLL (138 aa). S143 and S277 each carry phosphoserine. The region spanning 177-313 is the ADF-H 2 domain; that stretch reads GVAFPISQEA…TADFLYEEVH (137 aa). Phosphotyrosine is present on Y309. Residues 316–350 form a disordered region; sequence QHAHKQSFAKPKGPSGKRGIRRIIRGPAETEATTE. T349 carries the post-translational modification Phosphothreonine.

Belongs to the actin-binding proteins ADF family. Twinfilin subfamily. As to quaternary structure, interacts with G-actin; ADP-actin form and capping protein (CP). May also be able to interact with TWF2 and phosphoinositides, PI(4,5)P2. When bound to PI(4,5)P2, it is down-regulated. Interacts with ACTG1. Phosphorylated on serine and threonine residues.

The protein resides in the cytoplasm. It localises to the cytoskeleton. Actin-binding protein involved in motile and morphological processes. Inhibits actin polymerization, likely by sequestering G-actin. By capping the barbed ends of filaments, it also regulates motility. Seems to play an important role in clathrin-mediated endocytosis and distribution of endocytic organelles. The chain is Twinfilin-1 (TWF1) from Bos taurus (Bovine).